A 331-amino-acid polypeptide reads, in one-letter code: Geranylgeranyl transferase type-2 subunit beta (331 aa).

Residue Gly2 is modified to N-acetylglycine. Thr3 is modified (phosphothreonine). 6 PFTB repeats span residues 20 to 61, 68 to 109, 116 to 157, 164 to 205, 212 to 253, and 260 to 302; these read LEKH…DLMG, REEI…TLYD, INKV…ALLG, VEKA…AITS, SDLL…KIIG, and REKL…SLLG. Geranylgeranyl diphosphate is bound at residue 190-192; sequence HAG. Positions 238 and 240 each coordinate Zn(2+). Geranylgeranyl diphosphate is bound at residue 241 to 244; it reads YSWW. Zn(2+) is bound at residue His290.

The protein belongs to the protein prenyltransferase subunit beta family. In terms of assembly, heterotrimer composed of RABGGTA, RABGGTB and CHM; within this trimer, RABGGTA and RABGGTB form the catalytic component B, while CHM (component A) mediates peptide substrate binding. The Rab GGTase dimer (RGGT) interacts with CHM (component A) prior to Rab protein binding; the association is stabilized by geranylgeranyl pyrophosphate (GGpp). The CHM:RGGT:Rab complex is destabilized by GGpp. Interaction of RABGGTB with prenylated PTP4A2 precludes its association with RABGGTA and inhibits enzyme activity. Interacts with CHODL. Interacts with non-phosphorylated form of RAB8A; phosphorylation of RAB8A at 'Thr-72' disrupts this interaction. Zn(2+) serves as cofactor.

It catalyses the reaction geranylgeranyl diphosphate + L-cysteinyl-[protein] = S-geranylgeranyl-L-cysteinyl-[protein] + diphosphate. With respect to regulation, the enzymatic reaction requires the aid of a Rab escort protein (also called component A). Catalyzes the transfer of a geranylgeranyl moiety from geranylgeranyl diphosphate to both cysteines of Rab proteins with the C-terminal sequence -XXCC, -XCXC and -CCXX, such as RAB1A, RAB3A, RAB5A and RAB7A. In Bos taurus (Bovine), this protein is Geranylgeranyl transferase type-2 subunit beta (RABGGTB).